The following is a 198-amino-acid chain: MHVALYGGSFDPPHNGHLALCLFAVELLRIDRLIISVSINPFKGRYGAADEQRKQMASLFAGELSRVGISAEVSGWELEKKQPSYTVDLIRYVRSVYPLDRLTLLIGEDSFREIRSWKSWEILPSLCDLAVFRRTSPEDHRENSSFPFSSGTVRLIDFDFPLSSTVIRERVAADMPVGDLLPSAIRHYIVKHGLYRKA.

It belongs to the NadD family.

The enzyme catalyses nicotinate beta-D-ribonucleotide + ATP + H(+) = deamido-NAD(+) + diphosphate. It participates in cofactor biosynthesis; NAD(+) biosynthesis; deamido-NAD(+) from nicotinate D-ribonucleotide: step 1/1. Catalyzes the reversible adenylation of nicotinate mononucleotide (NaMN) to nicotinic acid adenine dinucleotide (NaAD). The protein is Probable nicotinate-nucleotide adenylyltransferase of Chlorobium limicola (strain DSM 245 / NBRC 103803 / 6330).